We begin with the raw amino-acid sequence, 395 residues long: ASTKGPSVFPLAPCSRSTSESTAALGCLVKDYFPEPVTVSWNSGALTSGVHTFPAVLQSSGLYSLSSVVTVPSSNFGTQTYTCNVDHKPSNTKVDKTVERKCCVECPPCPAPPVAGPSVFLFPPKPKDTLMISRTPEVTCVVVDVSHEDPEVQFNWYVDGVEVHNAKTKPREEQFNSTFRVVSVLTVVHQDWLNGKEYKCKVSNKGLPAPIEKTISKTKGQPREPQVYTLPPSREEMTKNQVSLTCLVKGFYPSDISVEWESNGQPENNYKTTPPMLDSDGSFFLYSKLTVDKSRWQQGNVFSCSVMHEALHNHYTQKSLSLSPELQLEESCAEAQDGELDGLWTTITIFITLFLLSVCYSATITFFKVKWIFSSVVDLKQTIVPDYRNMIRQGA.

The CH1 stretch occupies residues 1-98 (ASTKGPSVFP…PSNTKVDKTV (98 aa)). The Extracellular portion of the chain corresponds to 1-346 (ASTKGPSVFP…DGELDGLWTT (346 aa)). 3 Ig-like domains span residues 6–99 (PSVF…KTVE), 117–216 (PSVF…KTIS), and 225–321 (PQVY…KSLS). The cysteines at positions 27 and 83 are disulfide-linked. The hinge stretch occupies residues 99–110 (ERKCCVECPPCP). A CH2 region spans residues 111 to 219 (APPVAGPSVF…PIEKTISKTK (109 aa)). 2 disulfide bridges follow: Cys-140–Cys-200 and Cys-246–Cys-304. Asn-176 is a glycosylation site (N-linked (GlcNAc...) (complex) asparagine). The tract at residues 220–326 (GQPREPQVYT…QKSLSLSPEL (107 aa)) is CH3. Residues 347-367 (ITIFITLFLLSVCYSATITFF) form a helical membrane-spanning segment. Residues 368-395 (KVKWIFSSVVDLKQTIVPDYRNMIRQGA) are Cytoplasmic-facing.

As to quaternary structure, immunoglobulins are composed of two identical heavy chains and two identical light chains; disulfide-linked. In terms of processing, glycosylation on Asn-176 is required for interaction with Fc receptors and ability to activate the complement pathway. (Microbial infection) Deglycosylation on Asn-176 by S.pyogenes EndoS or Endos2 endoglucosidases prevents interaction between immunoglobulin-gamma (IgG) and Fc receptors, impairing ability to activate the complement pathway.

It localises to the secreted. The protein resides in the cell membrane. Its function is as follows. Constant region of immunoglobulin heavy chains. Immunoglobulins, also known as antibodies, are membrane-bound or secreted glycoproteins produced by B lymphocytes. In the recognition phase of humoral immunity, the membrane-bound immunoglobulins serve as receptors which, upon binding of a specific antigen, trigger the clonal expansion and differentiation of B lymphocytes into immunoglobulins-secreting plasma cells. Secreted immunoglobulins mediate the effector phase of humoral immunity, which results in the elimination of bound antigens. The antigen binding site is formed by the variable domain of one heavy chain, together with that of its associated light chain. Thus, each immunoglobulin has two antigen binding sites with remarkable affinity for a particular antigen. The variable domains are assembled by a process called V-(D)-J rearrangement and can then be subjected to somatic hypermutations which, after exposure to antigen and selection, allow affinity maturation for a particular antigen. The protein is Immunoglobulin heavy constant gamma 2 of Homo sapiens (Human).